A 302-amino-acid chain; its full sequence is Tegument protein VP22 (302 aa).

The span at 1–10 (MASSDGDRLC) shows a compositional bias: basic and acidic residues. Disordered stretches follow at residues 1–42 (MASS…PDDS) and 125–170 (SFTK…SSWC). Positions 154 to 244 (RPISFSTAPK…ANEADLGEGA (91 aa)) are interaction with gE. Residues 157–170 (SFSTAPKTATSSWC) are compositionally biased toward polar residues. Positions 212 to 224 (LDRLLTGAVIRIT) match the Nuclear export signal motif. Residues 243-302 (GASVSKRGHNRKTGDLQGGMGNEPMYAQVRKPKSRTDTQTTGRITNRSRARSASRTDTRK) are disordered.

The protein belongs to the alphaherpesvirinae VP22 tegument protein family. Interacts with gE (via C-terminus); this interaction is necessary for the recruitment of VP22/ORF9 to the Golgi and its packaging into virions. Interacts with gM (via C-terminus). Interacts with VP16/ORF10; this interaction allows the formation of a tripartite complex composed of VP16/ORF10, VP22/ORF9 and VHS/ORF17. Interacts with the capsid-binding protein ORF44. Interacts with host CGAS. In terms of processing, highly phosphorylated in the host cell. Packaging is selective for underphosphorylated forms.

It localises to the virion tegument. Its subcellular location is the host cytoplasm. The protein resides in the host nucleus. The protein localises to the host Golgi apparatus. In terms of biological role, tegument protein that plays different roles during the time course of infection. Participates in both the accumulation of viral mRNAs and viral protein translation at late time of infection. Modulates the RNase activity of the virion host shutoff protein ORF17 probably to ensure necessary levels of key cellular mRNAs and proteins. Plays a role in microtubule reorganization that occurs after viral infection by stabilizing microtubule network. Plays a role in the inhibition of host innate immune system by targeting the CGAS enzymatic activity which is the principal cytosolic DNA sensor that detects invading viral DNA. Acts by mediating disruption of liquid-like droplets in which CGAS is activated, thereby preventing CGAS activity. This Homo sapiens (Human) protein is Tegument protein VP22.